A 258-amino-acid chain; its full sequence is uncharacterized protein (258 aa).

Solcar repeat units follow at residues 9–78, 81–160, and 165–246; these read KPIL…AKAR, PGVR…FKKK, and DHVF…VKSH. A run of 6 helical transmembrane segments spans residues 11–31, 53–73, 87–107, 139–159, 171–191, and 218–239; these read ILVGGLSGLVAETLVFPLSTI, GLSSVLVSTLPSASSFFFVYE, LVSASVAEVVSCGILAPAEVV, MCGRNVPATAFQFVLYEQFKK, PKGAALSGAITAAVLTPLDVI, and FEKGLGLRVFASSLGLSIYLGT.

The protein belongs to the mitochondrial carrier (TC 2.A.29) family.

Its subcellular location is the mitochondrion inner membrane. This is an uncharacterized protein from Schizosaccharomyces pombe (strain 972 / ATCC 24843) (Fission yeast).